A 371-amino-acid polypeptide reads, in one-letter code: Ribosomal RNA small subunit methyltransferase H (371 aa).

S-adenosyl-L-methionine contacts are provided by residues glycine 43–histidine 45, aspartate 62, leucine 96, aspartate 110, and glutamine 117. A disordered region spans residues alanine 315–aspartate 371. A compositionally biased stretch (acidic residues) spans threonine 360–aspartate 371.

Belongs to the methyltransferase superfamily. RsmH family.

It is found in the cytoplasm. It carries out the reaction cytidine(1402) in 16S rRNA + S-adenosyl-L-methionine = N(4)-methylcytidine(1402) in 16S rRNA + S-adenosyl-L-homocysteine + H(+). Its function is as follows. Specifically methylates the N4 position of cytidine in position 1402 (C1402) of 16S rRNA. This Salinispora tropica (strain ATCC BAA-916 / DSM 44818 / JCM 13857 / NBRC 105044 / CNB-440) protein is Ribosomal RNA small subunit methyltransferase H.